Reading from the N-terminus, the 212-residue chain is Pyridoxine/pyridoxamine 5'-phosphate oxidase (212 aa).

Residues 7–10 (RREY) and Lys65 each bind substrate. FMN is bound by residues 60-65 (RIVLLK), 75-76 (FT), Arg81, Lys82, and Gln104. Tyr122, Arg126, and Ser130 together coordinate substrate. Residues 139–140 (QS) and Trp184 each bind FMN. Residue 190–192 (RLH) coordinates substrate. Position 194 (Arg194) interacts with FMN.

Belongs to the pyridoxamine 5'-phosphate oxidase family. Homodimer. FMN is required as a cofactor.

The enzyme catalyses pyridoxamine 5'-phosphate + O2 + H2O = pyridoxal 5'-phosphate + H2O2 + NH4(+). It catalyses the reaction pyridoxine 5'-phosphate + O2 = pyridoxal 5'-phosphate + H2O2. The protein operates within cofactor metabolism; pyridoxal 5'-phosphate salvage; pyridoxal 5'-phosphate from pyridoxamine 5'-phosphate: step 1/1. It participates in cofactor metabolism; pyridoxal 5'-phosphate salvage; pyridoxal 5'-phosphate from pyridoxine 5'-phosphate: step 1/1. Functionally, catalyzes the oxidation of either pyridoxine 5'-phosphate (PNP) or pyridoxamine 5'-phosphate (PMP) into pyridoxal 5'-phosphate (PLP). The chain is Pyridoxine/pyridoxamine 5'-phosphate oxidase from Pseudoalteromonas translucida (strain TAC 125).